A 303-amino-acid polypeptide reads, in one-letter code: Probable 5-dehydro-4-deoxyglucarate dehydratase (303 aa).

Belongs to the DapA family.

It catalyses the reaction 5-dehydro-4-deoxy-D-glucarate + H(+) = 2,5-dioxopentanoate + CO2 + H2O. It functions in the pathway carbohydrate acid metabolism; D-glucarate degradation; 2,5-dioxopentanoate from D-glucarate: step 2/2. The chain is Probable 5-dehydro-4-deoxyglucarate dehydratase from Leptothrix cholodnii (strain ATCC 51168 / LMG 8142 / SP-6) (Leptothrix discophora (strain SP-6)).